Here is a 283-residue protein sequence, read N- to C-terminus: Bis(5'-nucleosyl)-tetraphosphatase, symmetrical (283 aa).

It belongs to the Ap4A hydrolase family.

The enzyme catalyses P(1),P(4)-bis(5'-adenosyl) tetraphosphate + H2O = 2 ADP + 2 H(+). Functionally, hydrolyzes diadenosine 5',5'''-P1,P4-tetraphosphate to yield ADP. The sequence is that of Bis(5'-nucleosyl)-tetraphosphatase, symmetrical from Pseudomonas fluorescens (strain SBW25).